The sequence spans 103 residues: Growth-regulated alpha protein (103 aa).

Residues 1 to 30 (MARAANPAPRLLGAAMLLLLLVAAGRRAAG) form the signal peptide. Cystine bridges form between cysteine 39-cysteine 65 and cysteine 41-cysteine 81.

This sequence belongs to the intercrine alpha (chemokine CxC) family.

It is found in the secreted. In terms of biological role, has chemotactic activity for neutrophils. This chain is Growth-regulated alpha protein (CXCL1), found in Ovis aries (Sheep).